We begin with the raw amino-acid sequence, 152 residues long: UPF0266 membrane protein KPN78578_23010 (152 aa).

Transmembrane regions (helical) follow at residues 6-26 (LVIILFILALLAYAIYDQFIM), 45-65 (VDGMIFVGLTAILIYNNITQH), and 67-87 (TAITTWLLSVLALMGLYLFWI).

Belongs to the UPF0266 family.

The protein localises to the cell inner membrane. The protein is UPF0266 membrane protein KPN78578_23010 of Klebsiella pneumoniae subsp. pneumoniae (strain ATCC 700721 / MGH 78578).